A 662-amino-acid polypeptide reads, in one-letter code: Primary amine oxidase 2 (662 aa).

Positions 1-22 (MSQLLLFTILVFSSVFVIGSLS) are cleaved as a signal peptide. N-linked (GlcNAc...) asparagine glycosylation occurs at Asn154. 321 to 332 (FFDCGEFGCGQY) is a substrate binding site. Asp323 serves as the catalytic Proton acceptor. A disulfide bridge connects residues Cys342 and Cys368. 405–410 (VGNYDY) provides a ligand contact to substrate. Residue Tyr408 is the Schiff-base intermediate with substrate; via topaquinone of the active site. Tyr408 is subject to 2',4',5'-topaquinone. Cu cation is bound by residues His464 and His466. 2 residues coordinate Mn(2+): Asp473 and Asp475. The N-linked (GlcNAc...) asparagine glycan is linked to Asn568. Mn(2+)-binding residues include Asp602 and Ile603. Residue His613 participates in Cu cation binding.

This sequence belongs to the copper/topaquinone oxidase family. In terms of assembly, homodimer. The cofactor is Cu cation. Mn(2+) is required as a cofactor. Requires L-topaquinone as cofactor. Topaquinone (TPQ) is generated by copper-dependent autoxidation of a specific tyrosyl residue.

It carries out the reaction a primary methyl amine + O2 + H2O = an aldehyde + H2O2 + NH4(+). The protein is Primary amine oxidase 2 of Arabidopsis thaliana (Mouse-ear cress).